The sequence spans 524 residues: Vang-like protein 1 (524 aa).

Positions 1 to 15 are enriched in low complexity; it reads MDTESTYSGYSYYSS. Residues 1-85 are disordered; that stretch reads MDTESTYSGY…TTAITGTSEH (85 aa). Residues 1-117 lie on the Cytoplasmic side of the membrane; it reads MDTESTYSGY…KRYLGLTVAS (117 aa). The segment covering 73–85 has biased composition (polar residues); the sequence is GETTTAITGTSEH. Phosphoserine is present on residues Ser86 and Ser88. A helical membrane pass occupies residues 118–138; the sequence is FLGLLVFLTPIAFILLPPILW. At 139 to 151 the chain is on the extracellular side; the sequence is RDELEPCGTICEG. A helical membrane pass occupies residues 152 to 172; the sequence is LFISMAFKLLILLIGTWALFF. The Cytoplasmic segment spans residues 173–182; it reads RKRRADMPRV. The chain crosses the membrane as a helical span at residues 183–203; that stretch reads FVFRALLLVLIFLFVVSYWLF. The Extracellular segment spans residues 204 to 222; sequence YGVRILDSRDRNYQGIVQY. Residues 223–243 traverse the membrane as a helical segment; sequence AVSLVDALLFIHYLAIVLLEL. Residues 244 to 524 are Cytoplasmic-facing; sequence RQLQPMFTLQ…VLRLQSETSV (281 aa).

Belongs to the Vang family. In terms of assembly, heterodimer with VANGL2. Interacts through its C-terminal region with the N-terminal half of DVL1, DVL2 and DVL3. The PDZ domain of DVL1, DVL2 and DVL3 is required for the interaction. As to expression, according to PubMed:11956595, ubiquitously expressed. According to PubMed:12011995, expressed specifically in testis and ovary.

It localises to the cell membrane. The protein is Vang-like protein 1 (VANGL1) of Homo sapiens (Human).